Consider the following 79-residue polypeptide: Large ribosomal subunit protein uL29 (79 aa).

The protein belongs to the universal ribosomal protein uL29 family.

The chain is Large ribosomal subunit protein uL29 from Nocardia farcinica (strain IFM 10152).